A 113-amino-acid polypeptide reads, in one-letter code: Ranasmurfin (113 aa).

Tyr-2 carries the post-translational modification 2',4',5'-topaquinone. The lysine tyrosylquinone (Tyr-Lys) cross-link spans 2–31; sequence YACSFPPSEIPGSKECLAEALQKHQGFKKK. Cystine bridges form between Cys-4/Cys-62, Cys-17/Cys-65, and Cys-37/Cys-101. At Ser-9 the chain carries Aminomalonic acid (Ser); in chain B. A cross-link (S-cysteinyl 3-(oxidosulfanyl)alanine (Cys-Cys); in chain B) is located at residues 17–65; the sequence is CLAEALQKHQGFKKKSYALICAYLNYKEDAENYERAAEDFDSAVKCTGC. The segment at residues 30–108 is a cross-link (lysine tyrosylquinone (Lys-Tyr)); sequence KKSYALICAY…SLCTLFQKLY (79 aa). Cys-65 carries the post-translational modification Cysteine sulfenic acid (-SOH); in chain B. 2',4',5'-topaquinone is present on Tyr-108. 2 residues coordinate Zn(2+): Tyr-108 and His-112. Tyr-108 participates in a covalent cross-link: 5'-tyrosyl-5'-aminotyrosine (Tyr-Tyr) (interchain with Y-108).

Homodimer. The two chains, designated A and B, differ in their modifications, but not, it is thought, in their sequence. It depends on Zn(2+) as a cofactor. In terms of tissue distribution, foam nest.

It localises to the secreted. This Polypedates leucomystax (Common tree frog) protein is Ranasmurfin.